Reading from the N-terminus, the 90-residue chain is Putative septation protein SpoVG (90 aa).

This sequence belongs to the SpoVG family.

Functionally, could be involved in septation. The chain is Putative septation protein SpoVG from Clostridium perfringens (strain ATCC 13124 / DSM 756 / JCM 1290 / NCIMB 6125 / NCTC 8237 / Type A).